A 454-amino-acid chain; its full sequence is uncharacterized protein (454 aa).

Positions 1-21 (MKYKTVKSIPLFLLGSIVFTA) are cleaved as a signal peptide. Cys22 carries the N-palmitoyl cysteine lipid modification. Cys22 carries S-diacylglycerol cysteine lipidation. Residues 55 to 64 (ASSSSSTTTS) are compositionally biased toward low complexity. The disordered stretch occupies residues 55–87 (ASSSSSTTTSNDDNNQKGYFLETNRSTGTYDPN). Polar residues predominate over residues 65–87 (NDDNNQKGYFLETNRSTGTYDPN).

The protein resides in the cell membrane. This is an uncharacterized protein from Mycoplasma pneumoniae (strain ATCC 29342 / M129 / Subtype 1) (Mycoplasmoides pneumoniae).